Here is a 106-residue protein sequence, read N- to C-terminus: Phosphoribosyl-ATP pyrophosphatase 1 (106 aa).

It belongs to the PRA-PH family.

It is found in the cytoplasm. It catalyses the reaction 1-(5-phospho-beta-D-ribosyl)-ATP + H2O = 1-(5-phospho-beta-D-ribosyl)-5'-AMP + diphosphate + H(+). Its pathway is amino-acid biosynthesis; L-histidine biosynthesis; L-histidine from 5-phospho-alpha-D-ribose 1-diphosphate: step 2/9. The sequence is that of Phosphoribosyl-ATP pyrophosphatase 1 (hisE1) from Bradyrhizobium diazoefficiens (strain JCM 10833 / BCRC 13528 / IAM 13628 / NBRC 14792 / USDA 110).